Reading from the N-terminus, the 257-residue chain is Adenosylcobinamide-GDP ribazoletransferase (257 aa).

4 helical membrane-spanning segments follow: residues 28-48 (FARS…LVAL), 50-70 (LFVP…VYAV), 110-130 (VALA…VEVA), and 199-219 (WPQV…AALV).

It belongs to the CobS family. Mg(2+) serves as cofactor.

The protein localises to the cell membrane. It catalyses the reaction alpha-ribazole + adenosylcob(III)inamide-GDP = adenosylcob(III)alamin + GMP + H(+). The catalysed reaction is alpha-ribazole 5'-phosphate + adenosylcob(III)inamide-GDP = adenosylcob(III)alamin 5'-phosphate + GMP + H(+). The protein operates within cofactor biosynthesis; adenosylcobalamin biosynthesis; adenosylcobalamin from cob(II)yrinate a,c-diamide: step 7/7. In terms of biological role, joins adenosylcobinamide-GDP and alpha-ribazole to generate adenosylcobalamin (Ado-cobalamin). Also synthesizes adenosylcobalamin 5'-phosphate from adenosylcobinamide-GDP and alpha-ribazole 5'-phosphate. In Halorubrum lacusprofundi (strain ATCC 49239 / DSM 5036 / JCM 8891 / ACAM 34), this protein is Adenosylcobinamide-GDP ribazoletransferase.